We begin with the raw amino-acid sequence, 150 residues long: Endoribonuclease YbeY (150 aa).

Residues histidine 113, histidine 117, and histidine 123 each contribute to the Zn(2+) site.

Belongs to the endoribonuclease YbeY family. Zn(2+) serves as cofactor.

The protein localises to the cytoplasm. In terms of biological role, single strand-specific metallo-endoribonuclease involved in late-stage 70S ribosome quality control and in maturation of the 3' terminus of the 16S rRNA. The protein is Endoribonuclease YbeY of Malacoplasma penetrans (strain HF-2) (Mycoplasma penetrans).